We begin with the raw amino-acid sequence, 291 residues long: Undecaprenyl-diphosphatase (291 aa).

8 helical membrane passes run 1-21 (MFII…LTEF), 48-68 (SAFT…AWVF), 102-122 (LHVL…DDFI), 126-146 (LFSV…MIIA), 162-182 (INYF…WPGF), 203-223 (SDFT…LSLL), 231-251 (IADI…GLIA), and 267-287 (FAIY…GFGI).

It belongs to the UppP family.

Its subcellular location is the cell membrane. The catalysed reaction is di-trans,octa-cis-undecaprenyl diphosphate + H2O = di-trans,octa-cis-undecaprenyl phosphate + phosphate + H(+). In terms of biological role, catalyzes the dephosphorylation of undecaprenyl diphosphate (UPP). Confers resistance to bacitracin. This Staphylococcus aureus (strain Mu3 / ATCC 700698) protein is Undecaprenyl-diphosphatase.